The following is a 282-amino-acid chain: Biotin synthase (282 aa).

Residues 1 to 228 form the Radical SAM core domain; sequence MQEIFLCSIS…NARLMVAGGR (228 aa). The [4Fe-4S] cluster site is built by cysteine 17, cysteine 21, and cysteine 24. Residues cysteine 61, cysteine 96, cysteine 154, and arginine 221 each coordinate [2Fe-2S] cluster.

The protein belongs to the radical SAM superfamily. Biotin synthase family. In terms of assembly, homodimer. [4Fe-4S] cluster is required as a cofactor. Requires [2Fe-2S] cluster as cofactor.

The enzyme catalyses (4R,5S)-dethiobiotin + (sulfur carrier)-SH + 2 reduced [2Fe-2S]-[ferredoxin] + 2 S-adenosyl-L-methionine = (sulfur carrier)-H + biotin + 2 5'-deoxyadenosine + 2 L-methionine + 2 oxidized [2Fe-2S]-[ferredoxin]. It functions in the pathway cofactor biosynthesis; biotin biosynthesis; biotin from 7,8-diaminononanoate: step 2/2. Functionally, catalyzes the conversion of dethiobiotin (DTB) to biotin by the insertion of a sulfur atom into dethiobiotin via a radical-based mechanism. The protein is Biotin synthase of Helicobacter pylori (strain ATCC 700392 / 26695) (Campylobacter pylori).